We begin with the raw amino-acid sequence, 488 residues long: Bifunctional protein NifU/MnmA (488 aa).

The nifU-like protein stretch occupies residues 1–130 (MPERYGPRVI…DYWSRQGDAL (130 aa)). The tRNA-specific 2-thiouridylase MnmA stretch occupies residues 143-488 (RRGVVAAMSG…GGGIIARRDA (346 aa)). ATP is bound by residues 149-156 (AMSGGVDS) and Phe175. Cys240 (nucleophile) is an active-site residue. Cys240 and Cys333 are oxidised to a cystine. Gly264 lines the ATP pocket. The segment at 283-285 (KDQ) is interaction with tRNA. Catalysis depends on Cys333, which acts as the Cysteine persulfide intermediate. An interaction with tRNA region spans residues 433–434 (RY).

The protein in the N-terminal section; belongs to the NifU family. This sequence in the C-terminal section; belongs to the MnmA/TRMU family.

The protein resides in the cytoplasm. It catalyses the reaction S-sulfanyl-L-cysteinyl-[protein] + uridine(34) in tRNA + AH2 + ATP = 2-thiouridine(34) in tRNA + L-cysteinyl-[protein] + A + AMP + diphosphate + H(+). May be involved in the formation or repair of [Fe-S] clusters present in iron-sulfur proteins. Functionally, catalyzes the 2-thiolation of uridine at the wobble position (U34) of tRNA, leading to the formation of s(2)U34. This is Bifunctional protein NifU/MnmA (nifU/mnmA) from Rubrobacter xylanophilus (strain DSM 9941 / JCM 11954 / NBRC 16129 / PRD-1).